The primary structure comprises 1028 residues: Golgin subfamily A member 2 (1028 aa).

A disordered region spans residues 1–112 (MADQNRQIKL…NRPLSSTESL (112 aa)). The span at 40 to 60 (KGDQTDAPADRRSPENERVDV) shows a compositional bias: basic and acidic residues. Polar residues predominate over residues 74–87 (NPASAINTDNSAPQ). Coiled coils occupy residues 162–200 (NTQL…EQGA), 233–388 (ARQK…YAVQ), 414–690 (RDST…LLNG), 738–769 (LSRV…LTAL), and 799–840 (HEAL…LSGE). Residues 259-280 (RTLSSVSTQQKQHERHNKELEK) form a disordered region. Residues 756–791 (RRIHQDTRQQLTALSHDHHHHHHHEPHSTCAETDGS) form a disordered region. The segment at 944-981 (AMDVSSSPQSSTAEIQSQSSERPAADPISSPSLRPQED) is disordered. Residues 945–964 (MDVSSSPQSSTAEIQSQSSE) show a composition bias toward polar residues.

This sequence belongs to the GOLGA2 family.

The protein resides in the golgi apparatus. It localises to the cis-Golgi network membrane. The protein localises to the endoplasmic reticulum-Golgi intermediate compartment membrane. It is found in the cytoplasm. Its subcellular location is the cytoskeleton. The protein resides in the spindle pole. Functionally, peripheral membrane component of the cis-Golgi stack that acts as a membrane skeleton that maintains the structure of the Golgi apparatus, and as a vesicle thether that facilitates vesicle fusion to the Golgi membrane. Required for normal protein transport from the endoplasmic reticulum to the Golgi apparatus and the cell membrane. Plays a central role in mitotic Golgi disassembly. Also plays a key role in spindle pole assembly and centrosome organization. It probably promotes mitotic spindle pole assembly by activating assembly factors to nucleate microtubules around the Golgi and capture them to couple mitotic membranes to the spindle. Also required for the Golgi ribbon formation and glycosylation of membrane and secretory proteins. This is Golgin subfamily A member 2 from Danio rerio (Zebrafish).